Consider the following 356-residue polypeptide: Peptide chain release factor 1 (356 aa).

An N5-methylglutamine modification is found at Q235.

Belongs to the prokaryotic/mitochondrial release factor family. Post-translationally, methylated by PrmC. Methylation increases the termination efficiency of RF1.

The protein resides in the cytoplasm. In terms of biological role, peptide chain release factor 1 directs the termination of translation in response to the peptide chain termination codons UAG and UAA. The chain is Peptide chain release factor 1 from Mycobacteroides abscessus (strain ATCC 19977 / DSM 44196 / CCUG 20993 / CIP 104536 / JCM 13569 / NCTC 13031 / TMC 1543 / L948) (Mycobacterium abscessus).